Reading from the N-terminus, the 529-residue chain is Biotin-dependent 3-methylcrotonyl-coenzyme A carboxylase beta1 subunit (529 aa).

One can recognise a CoA carboxyltransferase N-terminal domain in the interval 16-272; it reads HRRLVAELNN…CEPAQWDVRR (257 aa). Residues 275–521 enclose the CoA carboxyltransferase C-terminal domain; it reads EPKYPQAELY…SLCAHAPLDQ (247 aa).

The protein belongs to the AccD/PCCB family. The biotin-dependent acyl-CoA carboxylase complex is composed of AccA1, which contains the biotin carboxylase (BC) and biotin carboxyl carrier protein (BCCP) domains, and AccD1, which contains the carboxyl transferase (CT) domain. The AccA1/AccD1 complex forms a dodecamer.

It catalyses the reaction 3-methylbut-2-enoyl-CoA + N(6)-carboxybiotinyl-L-lysyl-[protein] = 3-methyl-(2E)-glutaconyl-CoA + N(6)-biotinyl-L-lysyl-[protein]. It functions in the pathway amino-acid degradation; L-leucine degradation. In terms of biological role, component of a biotin-dependent acyl-CoA carboxylase complex. This subunit transfers the CO2 from carboxybiotin to the CoA ester substrate. When associated with the alpha1 subunit AccA1, is involved in branched amino-acid catabolism with methylcrotonyl coenzyme A as the substrate. Shows residual with propionyl-CoA and acetyl-CoA. The sequence is that of Biotin-dependent 3-methylcrotonyl-coenzyme A carboxylase beta1 subunit from Mycobacterium tuberculosis (strain ATCC 25618 / H37Rv).